The following is a 464-amino-acid chain: Putative protein TIC 214 C-terminal part (464 aa).

Belongs to the TIC214 family. Part of the Tic complex.

Its subcellular location is the plastid. It localises to the chloroplast. Involved in protein precursor import into chloroplasts. May be part of an intermediate translocation complex acting as a protein-conducting channel at the inner envelope. The polypeptide is Putative protein TIC 214 C-terminal part (Marchantia polymorpha (Common liverwort)).